Here is a 431-residue protein sequence, read N- to C-terminus: E3 ubiquitin-protein ligase RNF128 (431 aa).

Residues 1 to 38 (MGQLPGAGVFCRGGCGFSRLLAWCFLLVLSPQTPGSRG) form the signal peptide. Residues Asn48, Asn59, and Asn101 are each glycosylated (N-linked (GlcNAc...) asparagine). One can recognise a PA domain in the interval 75 to 186 (SPLEPVAGVL…LKGTKILQSI (112 aa)). A helical membrane pass occupies residues 211–231 (IFFVSVSFFIITAATVGYFIF). The RING-type; atypical zinc finger occupies 280-321 (CAVCIELYKPNDLVRILTCNHVFHKTCVDPWLLEHRTCPMCK). The segment covering 345–354 (VSNETSSNAS) has biased composition (polar residues). The interval 345 to 431 (VSNETSSNAS…QETTVREIKS (87 aa)) is disordered.

In terms of processing, auto-ubiquitinated. Controls the development of T-cell clonal anergy by ubiquitination.

It is found in the cytoplasm. It localises to the endomembrane system. The protein resides in the cytoskeleton. The protein localises to the perinuclear region. The catalysed reaction is S-ubiquitinyl-[E2 ubiquitin-conjugating enzyme]-L-cysteine + [acceptor protein]-L-lysine = [E2 ubiquitin-conjugating enzyme]-L-cysteine + N(6)-ubiquitinyl-[acceptor protein]-L-lysine.. It functions in the pathway protein modification; protein ubiquitination. Functionally, E3 ubiquitin-protein ligase that catalyzes 'Lys-27', 'Lys-48'- or 'Lys-63'-linked polyubiquitin chains formation and plays a role in different biological processes such as modulation of immune response, cytoskeletal dynamics or protein homeostasis. Inhibits IL2 and IL4 transcription, thereby playing an important role in the induction of the anergic phenotype, a long-term stable state of T-lymphocyte unresponsiveness to antigenic stimulation associated with the blockade of interleukin production. Ubiquitinates ARPC5 with 'Lys-48' linkages and COR1A with 'Lys-63' linkages leading to their degradation, down-regulation of these cytoskeletal components results in impaired lamellipodium formation and reduced accumulation of F-actin at the immunological synapse. Functions in the patterning of the dorsal ectoderm; sensitizes ectoderm to respond to neural-inducing signals. Plays a positive role in innate immune response by promoting 'Lys-63'-linked ubiquitination of TBK1 after RNA- or DNA-virus infection. Regulates alveolar macrophage activation and neutrophil infiltration by interacting with TLR4, targeting it for degradation, and inhibiting NF-kappa-B activation, hence decreasing pro-inflammatory cytokines. Negatively regulates the IL-3/STAT5 signaling pathway by facilitating 'Lys-27'-linked polyubiquitination of IL3RA leading to its degradation via lysosomal pathway. Directly regulates the N-glycosylation process in the endoplasmic reticulum by targeting the glycosyl-transferase RPN1 for ubiquitination and degradation. Other substrates targeted for degradation by RNF128 include transmembrane proteins CD40L, CD83 or the tetraspanin CD151. The polypeptide is E3 ubiquitin-protein ligase RNF128 (RNF128) (Bos taurus (Bovine)).